Consider the following 309-residue polypeptide: Homoserine kinase (309 aa).

ATP is bound at residue 95 to 105 (PQSRGLGSSAA).

It belongs to the GHMP kinase family. Homoserine kinase subfamily.

The protein resides in the cytoplasm. It carries out the reaction L-homoserine + ATP = O-phospho-L-homoserine + ADP + H(+). It functions in the pathway amino-acid biosynthesis; L-threonine biosynthesis; L-threonine from L-aspartate: step 4/5. Catalyzes the ATP-dependent phosphorylation of L-homoserine to L-homoserine phosphate. This is Homoserine kinase from Corynebacterium glutamicum (strain R).